The following is a 252-amino-acid chain: Proteasome subunit alpha type-7-1B (252 aa).

This sequence belongs to the peptidase T1A family. The 26S proteasome consists of a 20S proteasome core and two 19S regulatory subunits. The 20S proteasome core is composed of 28 subunits that are arranged in four stacked rings, resulting in a barrel-shaped structure. The two end rings are each formed by seven alpha subunits, and the two central rings are each formed by seven beta subunits. The catalytic chamber with the active sites is on the inside of the barrel. Testis specific.

The protein localises to the cytoplasm. Its subcellular location is the nucleus. The proteasome is a multicatalytic proteinase complex which is characterized by its ability to cleave peptides with Arg, Phe, Tyr, Leu, and Glu adjacent to the leaving group at neutral or slightly basic pH. The proteasome has an ATP-dependent proteolytic activity. The chain is Proteasome subunit alpha type-7-1B (Prosalpha4T2) from Drosophila melanogaster (Fruit fly).